The primary structure comprises 192 residues: Natural cytotoxicity triggering receptor 3 (192 aa).

Residues 1 to 18 form the signal peptide; it reads MAKVLLIVFIMVYAGSCA. The Ig-like domain occupies 19 to 126; the sequence is IWVSQPPEIR…VGTGNGTRLV (108 aa). The Extracellular portion of the chain corresponds to 19 to 147; the sequence is IWVSQPPEIR…AEPERAAYTS (129 aa). A disulfide bridge links C39 with C108. N42 and N121 each carry an N-linked (GlcNAc...) asparagine glycan. The chain crosses the membrane as a helical span at residues 148–168; it reads LLLRAGVYALSFLSVATGSVI. Residues 169–192 are Cytoplasmic-facing; that stretch reads YYQGKCLCHVGNTATPPTASEERF.

It belongs to the natural cytotoxicity receptor (NCR) family. Homodimer in the unliganted form. Interacts with CD3Z. Interacts with and is activated by binding to NCR3LG1. Interacts with and is activated by binding to BAG6. Interacts with and is inhibited by binding to LGALS3.

It localises to the cell membrane. Functionally, cell membrane receptor of natural killer/NK cells that is activated by binding of extracellular ligands including BAG6 and NCR3LG1. Stimulates NK cells cytotoxicity toward neighboring cells producing these ligands. It controls, for instance, NK cells cytotoxicity against tumor cells. Engagement of NCR3 by BAG6 also promotes myeloid dendritic cells (DC) maturation, both through killing DCs that did not acquire a mature phenotype, and inducing the release by NK cells of TNFA and IFNG that promote DC maturation. The sequence is that of Natural cytotoxicity triggering receptor 3 (Ncr3) from Rattus norvegicus (Rat).